A 557-amino-acid chain; its full sequence is MAAQGFLLIATFLLVLMVLARPLGSGLARLINDIPLPGTTGVERVLFRALGVSDREMNWKQYLCAILGLNMLGLAVLFFMLLGQHYLPLNPQQLPGLSWDLALNTAVSFVTNTNWQSYSGETTLSYFSQMAGLTVQNFLSAASGIAVIFALIRAFTRQSMSTLGNAWVDLLRITLWVLVPVALLIALFFIQQGALQNFQPYQAVNTVEGAQQLLPMGPVASQEAIKMLGTNGGGFFNANSSHPFENPTALTNFVQMLAIFLIPTALCFAFGEVTGDRRQGRMLLWAMSVIFVICVGVVMWAEVQGNPHLLALGADSSINMEGKESRFGVLVSSLFAVVTTAASCGAVIAMHDSFTALGGMVPMWLMQIGEVVFGGVGSGLYGMMLFVLLAVFIAGLMIGRTPEYLGKKIDVREMKLTALAILVTPTLVLMGAALAMMTDAGRSAMLNPGPHGFSEVLYAVSSAANNNGSAFAGLSANSPFWNCLLAFCMFVGRFGVIIPVMAIAGSLVSKKSQPASSGTLPTHGPLFVGLLIGTVLLVGALTFIPALALGPVAEYLS.

A run of 12 helical transmembrane segments spans residues 5–25, 63–83, 132–152, 170–190, 253–273, 283–303, 329–349, 356–376, 379–399, 416–436, 484–504, and 526–546; these read GFLL…PLGS, LCAI…MLLG, GLTV…FALI, LLRI…LFFI, FVQM…FGEV, LLWA…WAEV, VLVS…AVIA, ALGG…FGGV, GLYG…LMIG, LTAL…ALAM, LLAF…MAIA, and LFVG…FIPA.

It belongs to the KdpA family. The system is composed of three essential subunits: KdpA, KdpB and KdpC.

Its subcellular location is the cell inner membrane. In terms of biological role, part of the high-affinity ATP-driven potassium transport (or Kdp) system, which catalyzes the hydrolysis of ATP coupled with the electrogenic transport of potassium into the cytoplasm. This subunit binds the periplasmic potassium ions and delivers the ions to the membrane domain of KdpB through an intramembrane tunnel. The sequence is that of Potassium-transporting ATPase potassium-binding subunit from Escherichia coli (strain SE11).